The following is a 194-amino-acid chain: Molybdenum cofactor guanylyltransferase (194 aa).

Residues 12–14, K25, N53, D71, and D101 contribute to the GTP site; that span reads LAG. Residue D101 coordinates Mg(2+).

The protein belongs to the MobA family. Monomer. The cofactor is Mg(2+).

It is found in the cytoplasm. The enzyme catalyses Mo-molybdopterin + GTP + H(+) = Mo-molybdopterin guanine dinucleotide + diphosphate. Functionally, transfers a GMP moiety from GTP to Mo-molybdopterin (Mo-MPT) cofactor (Moco or molybdenum cofactor) to form Mo-molybdopterin guanine dinucleotide (Mo-MGD) cofactor. This chain is Molybdenum cofactor guanylyltransferase, found in Escherichia coli O6:H1 (strain CFT073 / ATCC 700928 / UPEC).